The sequence spans 493 residues: 3-octaprenyl-4-hydroxybenzoate carboxy-lyase (493 aa).

Residue Asn-172 participates in Mn(2+) binding. Prenylated FMN is bound by residues 175-177 (IYR), 189-191 (RWL), and 194-195 (RG). Glu-238 contacts Mn(2+). The active-site Proton donor is the Asp-287.

Belongs to the UbiD family. As to quaternary structure, homohexamer. Prenylated FMN serves as cofactor. Requires Mn(2+) as cofactor.

The protein localises to the cell membrane. It carries out the reaction a 4-hydroxy-3-(all-trans-polyprenyl)benzoate + H(+) = a 2-(all-trans-polyprenyl)phenol + CO2. It participates in cofactor biosynthesis; ubiquinone biosynthesis. In terms of biological role, catalyzes the decarboxylation of 3-octaprenyl-4-hydroxy benzoate to 2-octaprenylphenol, an intermediate step in ubiquinone biosynthesis. The sequence is that of 3-octaprenyl-4-hydroxybenzoate carboxy-lyase from Shewanella frigidimarina (strain NCIMB 400).